Consider the following 1451-residue polypeptide: Copper-transporting ATPase 2 (1451 aa).

The Cytoplasmic segment spans residues 1 to 646; sequence MPEQERKVTA…KTEIKQWKKS (646 aa). HMA domains lie at 57–123, 142–208, and 256–322; these read TTGV…FEAS, AVVK…FEAA, and ATLP…PGYF. Residues C68, C71, C153, C156, C267, and C270 each coordinate Cu(+). Residues 328-353 are disordered; it reads DGLEKESGSSSVPSLGSSQRQQEPGP. Residues 335–345 show a composition bias toward low complexity; it reads GSSSVPSLGSS. The region spanning 355 to 421 is the HMA 4 domain; sequence RTAVLTITGI…AVEDMGFEVS (67 aa). 3 positions are modified to phosphoserine: S469, S471, and S474. 2 HMA domains span residues 481–547 and 557–623; these read QKCF…FEAA and GDIE…FHAS. Residues C492, C495, C568, and C571 each coordinate Cu(+). A helical transmembrane segment spans residues 647–668; the sequence is FLCSLVFGIPVMGLMIYMLIPS. At 669-690 the chain is on the extracellular side; sequence SKPHETMVLDHNIIPGLSVLNL. The helical transmembrane segment at 691-710 threads the bilayer; the sequence is IFFILCTFVQFLGGWYFYVQ. Residues 711 to 717 lie on the Cytoplasmic side of the membrane; sequence AYKSLRH. The chain crosses the membrane as a helical span at residues 718–738; it reads KSANMDVLIVLATTIAYAYSL. The Extracellular segment spans residues 739 to 757; that stretch reads VILVVAIAEKAEKSPVTFF. Residues 758–778 traverse the membrane as a helical segment; it reads DTPPMLFVFIALGRWLEHVAK. Residues 779–912 lie on the Cytoplasmic side of the membrane; sequence SKTSEALAKL…KAPIQQLADR (134 aa). The chain crosses the membrane as a helical span at residues 913–935; it reads FSGYFVPFIIIISTLTLVVWIII. The Extracellular segment spans residues 936 to 965; that stretch reads GFVDFGIVQKYFPSPSKHISQTEVIIRFAF. The chain crosses the membrane as a helical span at residues 966-987; sequence QTSITVLCIACPCSLGLATPTA. The Cytoplasmic segment spans residues 988–1310; that stretch reads VMVGTGVAAQ…LSKRTVRRIR (323 aa). The active-site 4-aspartylphosphate intermediate is D1020. Mg(2+) is bound by residues D1255 and D1259. Residues 1311 to 1328 traverse the membrane as a helical segment; it reads VNLVLALIYNMVGIPIAA. Over 1329-1339 the chain is Extracellular; it reads GVFMPIGIVLQ. The chain crosses the membrane as a helical span at residues 1340–1357; it reads PWMGSAAASSVSVVLSSL. Residues 1358–1451 lie on the Cytoplasmic side of the membrane; that stretch reads QLKCYRKPDL…LSDRDEEQCI (94 aa). Phosphoserine occurs at positions 1384 and 1443.

Belongs to the cation transport ATPase (P-type) (TC 3.A.3) family. Type IB subfamily. In terms of assembly, monomer. Interacts with COMMD1/MURR1. Interacts with DCTN4, in a copper-dependent manner. Interacts with ATOX1. Interacts (via C-terminus) with ZBTB16/PLZF. Expressed in brain, liver, kidney, spleen and stomach. In brain, detected in neuronal cells of the hippocampal formation, olfactory bulbs, cerebellum, cerebral cortex and nuclei in the brainstem. Isoform PINA is expressed during night in adult pineal gland (pinealocytes) and retina. Isoform PINA is not detected in other tissue.

It is found in the golgi apparatus. Its subcellular location is the trans-Golgi network membrane. The protein resides in the late endosome. The catalysed reaction is Cu(+)(in) + ATP + H2O = Cu(+)(out) + ADP + phosphate + H(+). Its function is as follows. Copper ion transmembrane transporter involved in the export of copper out of the cells, such as the efflux of hepatic copper into the bile. In Rattus norvegicus (Rat), this protein is Copper-transporting ATPase 2 (Atp7b).